A 361-amino-acid polypeptide reads, in one-letter code: Protein SGT1 homolog (361 aa).

3 TPR repeats span residues Ala3–Thr36, Ala37–Met70, and His71–Asp104. A Phosphothreonine modification is found at Thr150. The CS domain maps to Lys159–Asp248. Positions Ala255–Glu295 are disordered. Thr262 carries the phosphothreonine modification. One can recognise an SGS domain in the interval Ser271–Ile361. Positions Ser277–Glu295 are enriched in basic and acidic residues.

It belongs to the SGT1 family. Post-translationally, constitutively phosphorylated at Thr-262 and phosphorylated at Thr-150 upon infection with the fungal pathogen Ustilago maydis.

The protein localises to the cytoplasm. The protein resides in the nucleus. May act as positive regulator of basal defense. May be involved in basal disease resistance to the fungal pathogen Ustilago maydis. This Zea mays (Maize) protein is Protein SGT1 homolog.